The following is a 250-amino-acid chain: ATP synthase subunit a (250 aa).

Transmembrane regions (helical) follow at residues 26 to 46, 84 to 104, 114 to 134, 143 to 163, 193 to 213, and 216 to 236; these read FTNA…FLYL, FFPM…LGMV, IIVT…YGFY, LFVP…IEII, FVAS…LPLI, and VALT…FAVL.

Belongs to the ATPase A chain family. In terms of assembly, F-type ATPases have 2 components, CF(1) - the catalytic core - and CF(0) - the membrane proton channel. CF(1) has five subunits: alpha(3), beta(3), gamma(1), delta(1), epsilon(1). CF(0) has three main subunits: a(1), b(2) and c(9-12). The alpha and beta chains form an alternating ring which encloses part of the gamma chain. CF(1) is attached to CF(0) by a central stalk formed by the gamma and epsilon chains, while a peripheral stalk is formed by the delta and b chains.

The protein resides in the cell inner membrane. Functionally, key component of the proton channel; it plays a direct role in the translocation of protons across the membrane. This Sinorhizobium medicae (strain WSM419) (Ensifer medicae) protein is ATP synthase subunit a.